The chain runs to 141 residues: Nucleoside diphosphate kinase (141 aa).

ATP is bound by residues lysine 11, phenylalanine 59, arginine 87, threonine 93, arginine 104, and asparagine 114. The Pros-phosphohistidine intermediate role is filled by histidine 117.

It belongs to the NDK family. In terms of assembly, homotetramer. It depends on Mg(2+) as a cofactor.

The protein localises to the cytoplasm. The enzyme catalyses a 2'-deoxyribonucleoside 5'-diphosphate + ATP = a 2'-deoxyribonucleoside 5'-triphosphate + ADP. It carries out the reaction a ribonucleoside 5'-diphosphate + ATP = a ribonucleoside 5'-triphosphate + ADP. Major role in the synthesis of nucleoside triphosphates other than ATP. The ATP gamma phosphate is transferred to the NDP beta phosphate via a ping-pong mechanism, using a phosphorylated active-site intermediate. The sequence is that of Nucleoside diphosphate kinase from Halorhodospira halophila (strain DSM 244 / SL1) (Ectothiorhodospira halophila (strain DSM 244 / SL1)).